The chain runs to 538 residues: MPETGVRNGAFGADKFGLKNLEAVYWNFGAPQLYEHALRKGEAMVNADGALCADTGVFTGRSPKDKFTVRDATTDQSVWWAGNQSITPEQFAALYADFLDHAEGMTLFAQDLYGGADPNFRIPTRVFTELAWHSLFIRTLLRRPDTSELAGFVPELTVIDLPSFRADPERHGVRSENVVAIDFVRKIILIGGSHYAGEMKKSIFTTLNYYLPDNGVLPMHCSANVGPEGDSTIFFGLSGTGKTTLSADPKRTLIGDDEHGWSKEGIFNFEGGCYAKCIKLSQEAEPEIYAASKRFGAVLENVVHDESTRVPDFDDGSKTENTRSAYPLEFIPNASLTGRAGQPKNLVMLAADAFGVLPPIARLTPAQAMYHFLSGYTAKVAGTERGLGNEPQPEFSTCFGSPFLPRDPSVYGNMLRELIARHNVDCWLVNTGWTGGKYGTGRRMPIKVTRALLGAALDGSLREVQFRTDRYFGFAVPTSVPGIEPHILDPIKTWADKAEFDKTACALVGMFQNNFTRFEGDVDAEVRAAAPEVRAAAE.

Substrate-binding residues include arginine 61, tyrosine 195, and lysine 201. Residues lysine 201, histidine 220, and 236–244 (GLSGTGKTT) each bind ATP. Mn(2+)-binding residues include lysine 201 and histidine 220. Aspartate 257 serves as a coordination point for Mn(2+). The ATP site is built by glutamate 285, arginine 323, and threonine 449. Arginine 323 is a binding site for substrate.

Belongs to the phosphoenolpyruvate carboxykinase (ATP) family. Requires Mn(2+) as cofactor.

The protein localises to the cytoplasm. The enzyme catalyses oxaloacetate + ATP = phosphoenolpyruvate + ADP + CO2. It participates in carbohydrate biosynthesis; gluconeogenesis. Involved in the gluconeogenesis. Catalyzes the conversion of oxaloacetate (OAA) to phosphoenolpyruvate (PEP) through direct phosphoryl transfer between the nucleoside triphosphate and OAA. The protein is Phosphoenolpyruvate carboxykinase (ATP) of Nitrobacter hamburgensis (strain DSM 10229 / NCIMB 13809 / X14).